Here is a 349-residue protein sequence, read N- to C-terminus: Fructose-1,6-bisphosphatase class 1 (349 aa).

4 residues coordinate Mg(2+): Glu-92, Asp-113, Leu-115, and Asp-116. Substrate contacts are provided by residues 116 to 119 (DGSS), Asn-209, Tyr-242, and Lys-272. Glu-278 is a binding site for Mg(2+).

This sequence belongs to the FBPase class 1 family. As to quaternary structure, homotetramer. The cofactor is Mg(2+).

The protein resides in the cytoplasm. The catalysed reaction is beta-D-fructose 1,6-bisphosphate + H2O = beta-D-fructose 6-phosphate + phosphate. The protein operates within carbohydrate biosynthesis; Calvin cycle. This Chloroherpeton thalassium (strain ATCC 35110 / GB-78) protein is Fructose-1,6-bisphosphatase class 1.